Here is a 147-residue protein sequence, read N- to C-terminus: Hemoglobin subunit epsilon (147 aa).

In terms of domain architecture, Globin spans 3–147; it reads HFTAEEKATI…VATALAHKYH (145 aa). Ser14 and Ser51 each carry phosphoserine. His64 and His93 together coordinate heme b.

This sequence belongs to the globin family. In terms of assembly, heterotetramer of two alpha chains and two epsilon chains in early embryonic hemoglobin Gower-2; two zeta chains and two epsilon chains in early embryonic hemoglobin Gower-1. In terms of tissue distribution, red blood cells.

Functionally, the epsilon chain is a beta-type chain of early mammalian embryonic hemoglobin. The polypeptide is Hemoglobin subunit epsilon (HBE1) (Daubentonia madagascariensis (Aye-aye)).